The following is a 595-amino-acid chain: Estrogen receptor (595 aa).

The tract at residues 1-184 (MTMTLHTKAS…AMESAKETRY (184 aa)) is modulating (transactivation AF-1); mediates interaction with MACROD1. The O-linked (GlcNAc) serine glycan is linked to Ser10. Residues 35–47 (LERPLGEVYVDGS) are required for interaction with NCOA1. Residues 35–174 (LERPLGEVYV…LASTGDKGSM (140 aa)) are interaction with DDX5; self-association. Phosphoserine; by CDK2 is present on residues Ser104 and Ser106. At Ser118 the chain carries Phosphoserine. The segment at 149 to 173 (FYRPTSDNRRQSGRERLASTGDKGS) is disordered. Over residues 154-165 (SDNRRQSGRERL) the composition is skewed to basic and acidic residues. Ser167 carries the phosphoserine; by CK2 modification. 2 consecutive NR C4-type zinc fingers follow at residues 185-205 (CAVC…CEGC) and 221-245 (CPAT…LRKC). Positions 185–250 (CAVCNDYASG…RLRKCYEVGM (66 aa)) form a DNA-binding region, nuclear receptor. The tract at residues 185 to 310 (CAVCNDYASG…TKKNSPALSL (126 aa)) is mediates interaction with DNTTIP2. The hinge stretch occupies residues 251-310 (MKGGIRKDRRGGRMLKHKRQRDEGEGRNEVGSSGDVRASNLWPSPLLIKHTKKNSPALSL). The segment covering 257-269 (KDRRGGRMLKHKR) has biased composition (basic residues). The tract at residues 257–287 (KDRRGGRMLKHKRQRDEGEGRNEVGSSGDVR) is disordered. Arg260 is subject to Asymmetric dimethylarginine; by PRMT1. Residues 262–595 (GRMLKHKRQR…EEAGAFPTTV (334 aa)) are interaction with AKAP13. The tract at residues 264-595 (MLKHKRQRDE…EEAGAFPTTV (332 aa)) is self-association. The NR LBD domain maps to 311-547 (TADQMVSALL…DLLLEMLDAH (237 aa)). The segment at 311–595 (TADQMVSALL…EEAGAFPTTV (285 aa)) is transactivation AF-2. 2 residues coordinate 17beta-estradiol: Glu353 and Arg394. A lipid anchor (S-palmitoyl cysteine) is attached at Cys447. His524 provides a ligand contact to 17beta-estradiol. A Phosphotyrosine; by Tyr-kinases modification is found at Tyr537. Thr571 carries an O-linked (GlcNAc) threonine glycan.

It belongs to the nuclear hormone receptor family. NR3 subfamily. In terms of assembly, binds DNA as a homodimer. Can form a heterodimer with ESR2. Interacts with coactivator NCOA5. Interacts with PELP1, the interaction is enhanced by 17-beta-estradiol; the interaction increases ESR1 transcriptional activity. Interacts with NCOA7; the interaction is ligand-inducible. Interacts with AKAP13, CUEDC2, HEXIM1, KDM5A, MAP1S, SMARD1, and UBE1C. Interacts with MUC1; the interaction is stimulated by 7 beta-estradiol (E2) and enhances ESR1-mediated transcription. Interacts with DNTTIP2, and UIMC1. Interacts with KMT2D/MLL2. Interacts with ATAD2; the interaction is enhanced by estradiol. Interacts with KIF18A and LDB1. Interacts with RLIM (via its C-terminus). Interacts with MACROD1. Interacts with SH2D4A and PLCG. Interacts with SH2D4A; the interaction blocks binding to PLCG and inhibits estrogen-induced cell proliferation. Interacts with DYNLL1. Interacts with CCDC62; the interaction requires estradiol and appears to enhance the transcription of target genes. Interacts with NR2C1; the interaction prevents homodimerization of ESR1 and suppresses its transcriptional activity and cell growth. Interacts with DNAAF4. Interacts with PRMT2. Interacts with RBFOX2. Interacts with EP300; the interaction is estrogen-dependent and enhanced by CITED1. Interacts with CITED1; the interaction is estrogen-dependent. Interacts with FAM120B, FOXL2, PHB2 and SLC30A9. Interacts with coactivators NCOA3 and NCOA6. Interacts with STK3/MST2 only in the presence of SAV1 and vice-versa. Binds to CSNK1D. Interacts with NCOA2; NCOA2 can interact with ESR1 AF-1 and AF-2 domains simultaneously and mediate their transcriptional synergy. Interacts with DDX5. Interacts with NCOA1; the interaction seems to require a self-association of N-terminal and C-terminal regions. Interacts with ZNF366, DDX17, NFKB1, RELA, SP1 and SP3. Interacts with NRIP1. Interacts with GPER1; the interaction occurs in an estrogen-dependent manner. Interacts with CLOCK and the interaction is stimulated by estrogen. Interacts with TRIP4 (ufmylated); estrogen dependent. Interacts with LMTK3; the interaction phosphorylates ESR1 (in vitro) and protects it against proteasomal degradation. Interacts with CCAR2 (via N-terminus) in a ligand-independent manner. Interacts with ZFHX3. Interacts with SFR1 in a ligand-dependent and -independent manner. Interacts with DCAF13, LATS1 and DCAF1; regulates ESR1 ubiquitination and ubiquitin-mediated proteasomal degradation. Interacts (via DNA-binding domain) with POU4F2 (C-terminus); this interaction increases the estrogen receptor ESR1 transcriptional activity in a DNA- and ligand 17-beta-estradiol-independent manner. Interacts with ESRRB isoform 1. Interacts with UBE3A and WBP2. Interacts with GTF2B. Interacts with RBM39. In the absence of hormonal ligand, interacts with TACC1. Interacts with PI3KR1 or PI3KR2 and PTK2/FAK1. Interacts with SRC. Interacts with BAG1; the interaction is promoted in the absence of estradiol (17-beta-estradiol/E2). Interacts with and ubiquitinated by STUB1; the interaction is promoted in the absence of estradiol (17-beta-estradiol/E2). Interacts with NEDD8. In terms of processing, ubiquitinated; regulated by LATS1 via DCAF1 it leads to ESR1 proteasomal degradation. Deubiquitinated by OTUB1. Ubiquitinated by STUB1/CHIP; in the CA1 hippocampal region following loss of endogenous circulating estradiol (17-beta-estradiol/E2). Ubiquitinated by UBR5, leading to its degradation: UBR5 specifically recognizes and binds ligand-bound ESR1 when it is not associated with coactivators (NCOAs). In presence of NCOAs, the UBR5-degron is not accessible, preventing its ubiquitination and degradation. Post-translationally, phosphorylated by cyclin A/CDK2 and CK1. Phosphorylation probably enhances transcriptional activity. Dephosphorylation at Ser-118 by PPP5C inhibits its transactivation activity. Phosphorylated by LMTK3 (in vitro). Palmitoylated at Cys-447 by ZDHHC7 and ZDHHC21. Palmitoylation is required for plasma membrane targeting and for rapid intracellular signaling via ERK and AKT kinases and cAMP generation, but not for signaling mediated by the nuclear hormone receptor. In terms of processing, dimethylated by PRMT1 at Arg-260. The methylation may favor cytoplasmic localization. Demethylated by JMJD6 at Arg-260.

The protein resides in the nucleus. The protein localises to the cytoplasm. It localises to the golgi apparatus. Its subcellular location is the cell membrane. In terms of biological role, nuclear hormone receptor. The steroid hormones and their receptors are involved in the regulation of eukaryotic gene expression and affect cellular proliferation and differentiation in target tissues. Ligand-dependent nuclear transactivation involves either direct homodimer binding to a palindromic estrogen response element (ERE) sequence or association with other DNA-binding transcription factors, such as AP-1/c-Jun, c-Fos, ATF-2, Sp1 and Sp3, to mediate ERE-independent signaling. Ligand binding induces a conformational change allowing subsequent or combinatorial association with multiprotein coactivator complexes through LXXLL motifs of their respective components. Mutual transrepression occurs between the estrogen receptor (ER) and NF-kappa-B in a cell-type specific manner. Decreases NF-kappa-B DNA-binding activity and inhibits NF-kappa-B-mediated transcription from the IL6 promoter and displace RELA/p65 and associated coregulators from the promoter. Recruited to the NF-kappa-B response element of the CCL2 and IL8 promoters and can displace CREBBP. Present with NF-kappa-B components RELA/p65 and NFKB1/p50 on ERE sequences. Can also act synergistically with NF-kappa-B to activate transcription involving respective recruitment adjacent response elements; the function involves CREBBP. Can activate the transcriptional activity of TFF1. Also mediates membrane-initiated estrogen signaling involving various kinase cascades. Essential for MTA1-mediated transcriptional regulation of BRCA1 and BCAS3. Maintains neuronal survival in response to ischemic reperfusion injury when in the presence of circulating estradiol (17-beta-estradiol/E2). In Felis catus (Cat), this protein is Estrogen receptor (ESR1).